The following is a 213-amino-acid chain: Thymidylate kinase (213 aa).

Glycine 10–threonine 17 serves as a coordination point for ATP.

The protein belongs to the thymidylate kinase family.

The catalysed reaction is dTMP + ATP = dTDP + ADP. Functionally, phosphorylation of dTMP to form dTDP in both de novo and salvage pathways of dTTP synthesis. The chain is Thymidylate kinase from Shigella boydii serotype 18 (strain CDC 3083-94 / BS512).